The sequence spans 284 residues: Bifunctional protein FolD (284 aa).

NADP(+) is bound by residues 164–166 (GRS) and Ser189.

It belongs to the tetrahydrofolate dehydrogenase/cyclohydrolase family. In terms of assembly, homodimer.

It carries out the reaction (6R)-5,10-methylene-5,6,7,8-tetrahydrofolate + NADP(+) = (6R)-5,10-methenyltetrahydrofolate + NADPH. The catalysed reaction is (6R)-5,10-methenyltetrahydrofolate + H2O = (6R)-10-formyltetrahydrofolate + H(+). Its pathway is one-carbon metabolism; tetrahydrofolate interconversion. Its function is as follows. Catalyzes the oxidation of 5,10-methylenetetrahydrofolate to 5,10-methenyltetrahydrofolate and then the hydrolysis of 5,10-methenyltetrahydrofolate to 10-formyltetrahydrofolate. This is Bifunctional protein FolD from Listeria welshimeri serovar 6b (strain ATCC 35897 / DSM 20650 / CCUG 15529 / CIP 8149 / NCTC 11857 / SLCC 5334 / V8).